The chain runs to 383 residues: Lipid-A-disaccharide synthase (383 aa).

This sequence belongs to the LpxB family.

It catalyses the reaction 2-N,3-O-bis[(3R)-3-hydroxytetradecanoyl]-alpha-D-glucosaminyl 1-phosphate + UDP-2-N,3-O-bis[(3R)-3-hydroxytetradecanoyl]-alpha-D-glucosamine = lipid A disaccharide (E. coli) + UDP + H(+). The enzyme catalyses a lipid X + a UDP-2-N,3-O-bis[(3R)-3-hydroxyacyl]-alpha-D-glucosamine = a lipid A disaccharide + UDP + H(+). It participates in glycolipid biosynthesis; lipid IV(A) biosynthesis; lipid IV(A) from (3R)-3-hydroxytetradecanoyl-[acyl-carrier-protein] and UDP-N-acetyl-alpha-D-glucosamine: step 5/6. Condensation of UDP-2,3-diacylglucosamine and 2,3-diacylglucosamine-1-phosphate to form lipid A disaccharide, a precursor of lipid A, a phosphorylated glycolipid that anchors the lipopolysaccharide to the outer membrane of the cell. This Pectobacterium carotovorum subsp. carotovorum (strain PC1) protein is Lipid-A-disaccharide synthase.